Reading from the N-terminus, the 391-residue chain is Lipid-A-disaccharide synthase (391 aa).

This sequence belongs to the LpxB family.

The enzyme catalyses a lipid X + a UDP-2-N,3-O-bis[(3R)-3-hydroxyacyl]-alpha-D-glucosamine = a lipid A disaccharide + UDP + H(+). It functions in the pathway bacterial outer membrane biogenesis; LPS lipid A biosynthesis. Its function is as follows. Condensation of UDP-2,3-diacylglucosamine and 2,3-diacylglucosamine-1-phosphate to form lipid A disaccharide, a precursor of lipid A, a phosphorylated glycolipid that anchors the lipopolysaccharide to the outer membrane of the cell. The sequence is that of Lipid-A-disaccharide synthase from Aromatoleum aromaticum (strain DSM 19018 / LMG 30748 / EbN1) (Azoarcus sp. (strain EbN1)).